Here is a 141-residue protein sequence, read N- to C-terminus: MKENDVVLRTVTKIVVFILLTFGFYVFFAGHNNPGGGFIGGLIFSSAFILMFLAFDVHEVLESLPIDFKKLMIVGAIISALTAIVPVFFGKSFLYQSEAYIHFPLLGELHVTTITLFELGILLTVVGVIVTIMLALSGGKS.

The next 4 membrane-spanning stretches (helical) occupy residues 10–30 (TVTK…FFAG), 35–55 (GGGF…FLAF), 70–90 (KLMI…VFFG), and 116–136 (LFEL…MLAL).

Belongs to the CPA3 antiporters (TC 2.A.63) subunit B family. In terms of assembly, may form a heterooligomeric complex that consists of seven subunits: mnhA2, mnhB2, mnhC2, mnhD2, mnhE2, mnhF2 and mnhG2.

Its subcellular location is the cell membrane. The chain is Putative antiporter subunit mnhB2 (mnhB2) from Staphylococcus haemolyticus (strain JCSC1435).